Consider the following 258-residue polypeptide: F-box/SPRY domain-containing protein 1 (258 aa).

Residues 6-54 enclose the F-box domain; it reads TEYAPDIPDNVLELIFSYLKLQDLRNCSLVCKSWNRFLNDENNEVWRAQ. A B30.2/SPRY domain is found at 64 to 256; that stretch reads FKTDLLSVVP…ISMVYLGPPL (193 aa).

It belongs to the FBXO45/Fsn family. As to quaternary structure, component of an E3 ubiquitin ligase complex composed of hiw and Fsn.

It is found in the synapse. It functions in the pathway protein modification; protein ubiquitination. In terms of biological role, required in the presynaptic motoneuron to down-regulate the levels of wnd and restrain synaptic terminal growth at the neuromuscular junction (NMJ). The sequence is that of F-box/SPRY domain-containing protein 1 from Aedes aegypti (Yellowfever mosquito).